Here is a 568-residue protein sequence, read N- to C-terminus: Autophagy-related protein 17 (568 aa).

Disordered stretches follow at residues Met1–Glu59 and Ser522–Phe568. Positions Ser522 to Glu546 are enriched in basic and acidic residues.

Belongs to the ATG17 family.

Its subcellular location is the cytoplasm. The protein localises to the preautophagosomal structure membrane. Functionally, autophagy-specific protein that functions in response to autophagy-inducing signals as a scaffold to recruit other ATG proteins to organize pre-autophagosomal structure (PAS) formation. Modulates the timing and magnitude of the autophagy response, such as the size of the sequestering vesicles. Plays particularly a role in pexophagy and nucleophagy. The polypeptide is Autophagy-related protein 17 (apg-9) (Neurospora crassa (strain ATCC 24698 / 74-OR23-1A / CBS 708.71 / DSM 1257 / FGSC 987)).